A 545-amino-acid chain; its full sequence is Chaperonin GroEL 1 (545 aa).

ATP contacts are provided by residues 30-33 (TLGP), K51, 87-91 (DGTTT), G415, and D495.

This sequence belongs to the chaperonin (HSP60) family. In terms of assembly, forms a cylinder of 14 subunits composed of two heptameric rings stacked back-to-back. Interacts with the co-chaperonin GroES.

It is found in the cytoplasm. It carries out the reaction ATP + H2O + a folded polypeptide = ADP + phosphate + an unfolded polypeptide.. Its function is as follows. Together with its co-chaperonin GroES, plays an essential role in assisting protein folding. The GroEL-GroES system forms a nano-cage that allows encapsulation of the non-native substrate proteins and provides a physical environment optimized to promote and accelerate protein folding. The sequence is that of Chaperonin GroEL 1 from Sinorhizobium medicae (strain WSM419) (Ensifer medicae).